The chain runs to 81 residues: Sulfur carrier protein TusA (81 aa).

Cys19 serves as the catalytic Cysteine persulfide intermediate.

It belongs to the sulfur carrier protein TusA family. As to quaternary structure, interacts with IscS.

It is found in the cytoplasm. It participates in tRNA modification. Sulfur carrier protein involved in sulfur trafficking in the cell. Part of a sulfur-relay system required for 2-thiolation during synthesis of 2-thiouridine of the modified wobble base 5-methylaminomethyl-2-thiouridine (mnm(5)s(2)U) in tRNA. Interacts with IscS and stimulates its cysteine desulfurase activity. Accepts an activated sulfur from IscS, which is then transferred to TusD, and thus determines the direction of sulfur flow from IscS to 2-thiouridine formation. Also appears to be involved in sulfur transfer for the biosynthesis of molybdopterin. In Cronobacter sakazakii (strain ATCC BAA-894) (Enterobacter sakazakii), this protein is Sulfur carrier protein TusA.